Consider the following 472-residue polypeptide: Glutamine synthetase (472 aa).

Residues 17–101 (YDIKFVLLRF…LRCSIYEPST (85 aa)) form the GS beta-grasp domain. The GS catalytic domain maps to 109–472 (PRSIAIRAEN…HPVEFEMYYA (364 aa)). Residues Glu-134 and Glu-136 each contribute to the Mg(2+) site. Glu-212 lines the ATP pocket. The Mg(2+) site is built by Glu-217 and Glu-225. L-glutamate is bound by residues 269–270 (NG) and Gly-270. His-274 is a binding site for Mg(2+). ATP is bound by residues 276-278 (NMS) and Ser-278. Residues Arg-326, Glu-332, and Arg-344 each contribute to the L-glutamate site. ATP contacts are provided by Arg-344, Arg-349, and Lys-357. Glu-362 lines the Mg(2+) pocket. Arg-364 provides a ligand contact to L-glutamate. Tyr-402 is modified (O-AMP-tyrosine).

Belongs to the glutamine synthetase family. As to quaternary structure, oligomer of 12 subunits arranged in the form of two hexameric ring. Mg(2+) is required as a cofactor.

The protein localises to the cytoplasm. The enzyme catalyses L-glutamate + NH4(+) + ATP = L-glutamine + ADP + phosphate + H(+). The activity of this enzyme could be controlled by adenylation under conditions of abundant glutamine. Its function is as follows. Catalyzes the ATP-dependent biosynthesis of glutamine from glutamate and ammonia. This Pasteurella multocida (strain Pm70) protein is Glutamine synthetase.